The following is a 338-amino-acid chain: LINE-1 retrotransposable element ORF1 protein (338 aa).

The disordered stretch occupies residues 1 to 40; sequence MGKKQNRKTGNSKTQSASPPPKERSSSPATEQSWMENDFD. Polar residues-rich tracts occupy residues 8 to 17 and 26 to 35; these read KTGNSKTQSA and SSPATEQSWM. Residues 49-153 adopt a coiled-coil conformation; that stretch reads RSNYSELRED…QSLQEIWDYV (105 aa). Positions 157-252 are RNA recognition motif (RRM) domain; that stretch reads NLRLIGVPES…KGKPIRLTAD (96 aa). The segment at 253 to 317 is C-terminal domain (CTD); that stretch reads LSAETLQARR…TTRPALKELL (65 aa).

The protein belongs to the transposase 22 family. In terms of assembly, homotrimer (via coiled coil domain). May also form larger homooligomers. May interact with DDX39A, HNRNPA1, SERBP1 and YBX1. Interacts with TEX19 and UBR2. Interacts with MOV10. Interacts with APOBEC3D; this interaction inhibits LINE-1 retrotransposition. In terms of processing, polyubiquitinated, probably by UBR2, which induces its degradation.

It is found in the nucleus. It localises to the nucleolus. Its subcellular location is the cytoplasm. The protein resides in the cytoplasmic ribonucleoprotein granule. The protein localises to the stress granule. Functionally, nucleic acid-binding protein which is essential for retrotransposition of LINE-1 elements in the genome. Functions as a nucleic acid chaperone binding its own transcript and therefore preferentially mobilizing the transcript from which they are encoded. The protein is LINE-1 retrotransposable element ORF1 protein (L1RE1) of Homo sapiens (Human).